Consider the following 278-residue polypeptide: HTH-type transcriptional regulator TsaQ1/TsaQ2 (278 aa).

An HTH iclR-type domain is found at 19 to 80 (VHSLAKGLEI…PRSRKLAMGA (62 aa)). Residues 40–59 (NQQLVELTGLPKATVSRLTS) constitute a DNA-binding region (H-T-H motif). The IclR-ED domain occupies 95-266 (LQRIARPHME…VQDIQAEMRA (172 aa)).

Functionally, both copies function as additional regulators for the tsa locus, specifically for tsaT. This is HTH-type transcriptional regulator TsaQ1/TsaQ2 (tsaQ1) from Comamonas testosteroni (Pseudomonas testosteroni).